We begin with the raw amino-acid sequence, 117 residues long: NADH-ubiquinone oxidoreductase chain 3 (117 aa).

Helical transmembrane passes span 4–24, 60–80, and 86–106; these read IIFI…LASI, ITII…MIII, and IMIW…GLYH.

This sequence belongs to the complex I subunit 3 family.

Its subcellular location is the mitochondrion membrane. The catalysed reaction is a ubiquinone + NADH + 5 H(+)(in) = a ubiquinol + NAD(+) + 4 H(+)(out). Core subunit of the mitochondrial membrane respiratory chain NADH dehydrogenase (Complex I) that is believed to belong to the minimal assembly required for catalysis. Complex I functions in the transfer of electrons from NADH to the respiratory chain. The immediate electron acceptor for the enzyme is believed to be ubiquinone. The sequence is that of NADH-ubiquinone oxidoreductase chain 3 (mt:ND3) from Drosophila melanogaster (Fruit fly).